The sequence spans 1024 residues: Integrator complex subunit 7 homolog (1024 aa).

2 stretches are compositionally biased toward polar residues: residues 1–11 and 19–36; these read MSKYKNSSLLN and PSLS…QLPP. Disordered stretches follow at residues 1-109, 472-502, and 842-863; these read MSKY…PTNS, DNNN…NNNN, and NNNN…NNNN. Low complexity-rich tracts occupy residues 44–77, 85–96, and 473–502; these read STNN…NNTV, TAGSSTSSASSV, and NNNN…NNNN.

Belongs to the Integrator subunit 7 family. In terms of assembly, component of the Integrator complex. The core complex associates with protein phosphatase 2A subunits, to form the Integrator-PP2A (INTAC) complex.

The protein localises to the nucleus. It localises to the chromosome. It is found in the cytoplasm. Component of the integrator complex, a multiprotein complex that terminates RNA polymerase II (Pol II) transcription in the promoter-proximal region of genes. The integrator complex provides a quality checkpoint during transcription elongation by driving premature transcription termination of transcripts that are unfavorably configured for transcriptional elongation: the complex terminates transcription by (1) catalyzing dephosphorylation of the C-terminal domain (CTD) of Pol II subunit polr2a, (2) degrading the exiting nascent RNA transcript via endonuclease activity and (3) promoting the release of Pol II from bound DNA. The integrator complex is also involved in terminating the synthesis of non-coding Pol II transcripts, such as enhancer RNAs (eRNAs), small nuclear RNAs (snRNAs), telomerase RNAs and long non-coding RNAs (lncRNAs). The sequence is that of Integrator complex subunit 7 homolog (ints7) from Dictyostelium discoideum (Social amoeba).